Reading from the N-terminus, the 112-residue chain is T cell receptor alpha variable 12-1 (112 aa).

Residues 1 to 20 (MISLRVLLVILWLQLSWVWS) form the signal peptide. The region spanning 23 to 112 (KEVEQDPGPF…DSATYLCVVN (90 aa)) is the Ig-like domain. Asparagine 43 is a glycosylation site (N-linked (GlcNAc...) asparagine). Cysteine 44 and cysteine 109 are joined by a disulfide.

In terms of assembly, alpha-beta TR is a heterodimer composed of an alpha and beta chain; disulfide-linked. The alpha-beta TR is associated with the transmembrane signaling CD3 coreceptor proteins to form the TR-CD3 (TcR or TCR). The assembly of alpha-beta TR heterodimers with CD3 occurs in the endoplasmic reticulum where a single alpha-beta TR heterodimer associates with one CD3D-CD3E heterodimer, one CD3G-CD3E heterodimer and one CD247 homodimer forming a stable octameric structure. CD3D-CD3E and CD3G-CD3E heterodimers preferentially associate with TR alpha and TR beta chains, respectively. The association of the CD247 homodimer is the last step of TcR assembly in the endoplasmic reticulum and is required for transport to the cell surface.

The protein localises to the cell membrane. In terms of biological role, v region of the variable domain of T cell receptor (TR) alpha chain that participates in the antigen recognition. Alpha-beta T cell receptors are antigen specific receptors which are essential to the immune response and are present on the cell surface of T lymphocytes. Recognize peptide-major histocompatibility (MH) (pMH) complexes that are displayed by antigen presenting cells (APC), a prerequisite for efficient T cell adaptive immunity against pathogens. Binding of alpha-beta TR to pMH complex initiates TR-CD3 clustering on the cell surface and intracellular activation of LCK that phosphorylates the ITAM motifs of CD3G, CD3D, CD3E and CD247 enabling the recruitment of ZAP70. In turn ZAP70 phosphorylates LAT, which recruits numerous signaling molecules to form the LAT signalosome. The LAT signalosome propagates signal branching to three major signaling pathways, the calcium, the mitogen-activated protein kinase (MAPK) kinase and the nuclear factor NF-kappa-B (NF-kB) pathways, leading to the mobilization of transcription factors that are critical for gene expression and essential for T cell growth and differentiation. The T cell repertoire is generated in the thymus, by V-(D)-J rearrangement. This repertoire is then shaped by intrathymic selection events to generate a peripheral T cell pool of self-MH restricted, non-autoaggressive T cells. Post-thymic interaction of alpha-beta TR with the pMH complexes shapes TR structural and functional avidity. This chain is T cell receptor alpha variable 12-1, found in Homo sapiens (Human).